The sequence spans 92 residues: Small ribosomal subunit protein uS19 (92 aa).

Belongs to the universal ribosomal protein uS19 family.

Functionally, protein S19 forms a complex with S13 that binds strongly to the 16S ribosomal RNA. In Methylorubrum extorquens (strain CM4 / NCIMB 13688) (Methylobacterium extorquens), this protein is Small ribosomal subunit protein uS19.